The following is a 481-amino-acid chain: U6 small nuclear RNA (adenine-(43)-N(6))-methyltransferase (481 aa).

S-adenosyl-L-methionine-binding residues include Lys-82, Gly-108, Asp-131, Thr-164, and Asn-184.

This sequence belongs to the methyltransferase superfamily. METTL16/RlmF family. As to quaternary structure, self-associates. Interacts with dlc-1; the interaction is direct, and is required for nuclear localization of mett-10.

Its subcellular location is the nucleus. It catalyses the reaction an adenosine in mRNA + S-adenosyl-L-methionine = an N(6)-methyladenosine in mRNA + S-adenosyl-L-homocysteine + H(+). It carries out the reaction adenosine in U6 snRNA + S-adenosyl-L-methionine = N(6)-methyladenosine in U6 snRNA + S-adenosyl-L-homocysteine + H(+). Its function is as follows. RNA N6-methyltransferase that methylates adenosine residues at the N(6) position of a subset of RNAs and is involved in S-adenosyl-L-methionine homeostasis by regulating splicing of S-adenosylmethionine synthase transcripts (sams-3, sams-4 and sams-5). Able to N6-methylate a subset of mRNAs containing the 5'UACAGAAAC-3' nonamer sequence. Plays a key role in S-adenosyl-L-methionine homeostasis: under rich-diet conditions, catalyzes N6-methylation of S-adenosylmethionine synthase mRNAs (sams-3, sams-4 and sams-5), directly inhibiting splicing and protein production of S-adenosylmethionine synthase. In addition to mRNAs, also able to mediate N6-methylation of U6 small nuclear RNA (U6 snRNA). Required for gamete production, inhibiting germ cell proliferative fate and ensuring germ cell meiotic development. Also promotes progression of the mitotic cell cycle in those germ cells that continue to proliferate. Plays a role in the development of the vulva, somatic gonad and embryo. The polypeptide is U6 small nuclear RNA (adenine-(43)-N(6))-methyltransferase (Caenorhabditis briggsae).